The chain runs to 240 residues: Uridylate kinase (240 aa).

12–15 is an ATP binding site; the sequence is KLSG. Positions 20-25 are involved in allosteric activation by GTP; it reads GEKGFG. G54 is a UMP binding site. 2 residues coordinate ATP: G55 and R59. Residues D74 and 135–142 contribute to the UMP site; that span reads TGSPYFST. ATP is bound by residues N163, Y169, and D172.

The protein belongs to the UMP kinase family. In terms of assembly, homohexamer.

It is found in the cytoplasm. The enzyme catalyses UMP + ATP = UDP + ADP. It participates in pyrimidine metabolism; CTP biosynthesis via de novo pathway; UDP from UMP (UMPK route): step 1/1. Its activity is regulated as follows. Allosterically activated by GTP. Inhibited by UTP. In terms of biological role, catalyzes the reversible phosphorylation of UMP to UDP. The chain is Uridylate kinase from Lactiplantibacillus plantarum (strain ATCC BAA-793 / NCIMB 8826 / WCFS1) (Lactobacillus plantarum).